Here is a 215-residue protein sequence, read N- to C-terminus: Cytochrome b-c1 complex subunit Rieske, mitochondrial (215 aa).

The transit peptide at 1 to 22 (MLGIRSSVKTCFKPMSLTSKRL) directs the protein to the mitochondrion. Residues 23–30 (ISQSLLAS) constitute a propeptide, removed in mature form. The Mitochondrial matrix portion of the chain corresponds to 31–50 (KSTYRTPNFDDVLKENNDAD). Residues 51–80 (KGRSYAYFMVGAMGLLSSAGAKSTVETFIS) form a helical membrane-spanning segment. At 81 to 215 (SMTATADVLA…EFDGDKVIVG (135 aa)) the chain is on the mitochondrial intermembrane side. Residues 90 to 93 (AMAK) are hinge. The Rieske domain occupies 123-214 (PHEIQEANSV…YEFDGDKVIV (92 aa)). 4 residues coordinate [2Fe-2S] cluster: Cys-159, His-161, Cys-178, and His-181. Residues Cys-164 and Cys-180 are joined by a disulfide bond.

The protein belongs to the Rieske iron-sulfur protein family. As to quaternary structure, component of the ubiquinol-cytochrome c oxidoreductase (cytochrome b-c1 complex, complex III, CIII), a multisubunit enzyme composed of 10 subunits. The complex is composed of 3 respiratory subunits cytochrome b (COB), cytochrome c1 (CYT1) and Rieske protein (RIP1), 2 core protein subunits COR1 and QCR2, and 5 low-molecular weight protein subunits QCR6, QCR7, QCR8, QCR9 and QCR10. The complex exists as an obligatory dimer and forms supercomplexes (SCs) in the inner mitochondrial membrane with a monomer or a dimer of cytochrome c oxidase (complex IV, CIV), resulting in 2 different assemblies (supercomplexes III(2)IV and III(2)IV(2)). RIP1 interacts with QCR10 on the intermembrane space (IMS) side, and with QCR9. [2Fe-2S] cluster serves as cofactor. In terms of processing, processed by both the mitochondrial processing peptidase (MPP) and the mitochondrial intermediate protease (MIP). Initially, MPP removes 22 amino acids from the newly imported precursor in the mitochondrial matrix. This proteolytic processing is then followed by a second proteolytic cleavage by MIP, which removes an octapeptide to generate mature-sized RIP1.

Its subcellular location is the mitochondrion inner membrane. It carries out the reaction a quinol + 2 Fe(III)-[cytochrome c](out) = a quinone + 2 Fe(II)-[cytochrome c](out) + 2 H(+)(out). Component of the ubiquinol-cytochrome c oxidoreductase, a multisubunit transmembrane complex that is part of the mitochondrial electron transport chain which drives oxidative phosphorylation. The respiratory chain contains 3 multisubunit complexes succinate dehydrogenase (complex II, CII), ubiquinol-cytochrome c oxidoreductase (cytochrome b-c1 complex, complex III, CIII) and cytochrome c oxidase (complex IV, CIV), that cooperate to transfer electrons derived from NADH and succinate to molecular oxygen, creating an electrochemical gradient over the inner membrane that drives transmembrane transport and the ATP synthase. The cytochrome b-c1 complex catalyzes electron transfer from ubiquinol to cytochrome c, linking this redox reaction to translocation of protons across the mitochondrial inner membrane, with protons being carried across the membrane as hydrogens on the quinol. In the process called Q cycle, 2 protons are consumed from the matrix, 4 protons are released into the intermembrane space and 2 electrons are passed to cytochrome c. The Rieske protein is a catalytic core subunit containing a [2Fe-2S] iron-sulfur cluster. It cycles between 2 conformational states during catalysis to transfer electrons from the quinol bound in the Q(0) site in cytochrome b (COB) to cytochrome c1 (CYT1). The protein is Cytochrome b-c1 complex subunit Rieske, mitochondrial (RIP1) of Saccharomyces cerevisiae (strain ATCC 204508 / S288c) (Baker's yeast).